A 138-amino-acid polypeptide reads, in one-letter code: Ribosome-binding factor A (138 aa).

The protein belongs to the RbfA family. As to quaternary structure, monomer. Binds 30S ribosomal subunits, but not 50S ribosomal subunits or 70S ribosomes.

It is found in the cytoplasm. One of several proteins that assist in the late maturation steps of the functional core of the 30S ribosomal subunit. Associates with free 30S ribosomal subunits (but not with 30S subunits that are part of 70S ribosomes or polysomes). Required for efficient processing of 16S rRNA. May interact with the 5'-terminal helix region of 16S rRNA. This is Ribosome-binding factor A from Chromobacterium violaceum (strain ATCC 12472 / DSM 30191 / JCM 1249 / CCUG 213 / NBRC 12614 / NCIMB 9131 / NCTC 9757 / MK).